Here is a 466-residue protein sequence, read N- to C-terminus: 3-isopropylmalate dehydratase large subunit (466 aa).

[4Fe-4S] cluster-binding residues include Cys347, Cys408, and Cys411.

It belongs to the aconitase/IPM isomerase family. LeuC type 1 subfamily. As to quaternary structure, heterodimer of LeuC and LeuD. The cofactor is [4Fe-4S] cluster.

The enzyme catalyses (2R,3S)-3-isopropylmalate = (2S)-2-isopropylmalate. Its pathway is amino-acid biosynthesis; L-leucine biosynthesis; L-leucine from 3-methyl-2-oxobutanoate: step 2/4. In terms of biological role, catalyzes the isomerization between 2-isopropylmalate and 3-isopropylmalate, via the formation of 2-isopropylmaleate. The polypeptide is 3-isopropylmalate dehydratase large subunit (Herminiimonas arsenicoxydans).